Consider the following 163-residue polypeptide: Nucleotide-binding protein CJE0423 (163 aa).

Belongs to the YajQ family.

Functionally, nucleotide-binding protein. The sequence is that of Nucleotide-binding protein CJE0423 from Campylobacter jejuni (strain RM1221).